Here is a 183-residue protein sequence, read N- to C-terminus: Crossover junction endodeoxyribonuclease RuvC (183 aa).

Residues Asp7, Glu66, and Asp138 contribute to the active site. Residues Asp7, Glu66, and Asp138 each coordinate Mg(2+).

The protein belongs to the RuvC family. As to quaternary structure, homodimer which binds Holliday junction (HJ) DNA. The HJ becomes 2-fold symmetrical on binding to RuvC with unstacked arms; it has a different conformation from HJ DNA in complex with RuvA. In the full resolvosome a probable DNA-RuvA(4)-RuvB(12)-RuvC(2) complex forms which resolves the HJ. It depends on Mg(2+) as a cofactor.

Its subcellular location is the cytoplasm. The catalysed reaction is Endonucleolytic cleavage at a junction such as a reciprocal single-stranded crossover between two homologous DNA duplexes (Holliday junction).. Its function is as follows. The RuvA-RuvB-RuvC complex processes Holliday junction (HJ) DNA during genetic recombination and DNA repair. Endonuclease that resolves HJ intermediates. Cleaves cruciform DNA by making single-stranded nicks across the HJ at symmetrical positions within the homologous arms, yielding a 5'-phosphate and a 3'-hydroxyl group; requires a central core of homology in the junction. The consensus cleavage sequence is 5'-(A/T)TT(C/G)-3'. Cleavage occurs on the 3'-side of the TT dinucleotide at the point of strand exchange. HJ branch migration catalyzed by RuvA-RuvB allows RuvC to scan DNA until it finds its consensus sequence, where it cleaves and resolves the cruciform DNA. This is Crossover junction endodeoxyribonuclease RuvC from Burkholderia ambifaria (strain MC40-6).